We begin with the raw amino-acid sequence, 242 residues long: Segregation and condensation protein A (242 aa).

Belongs to the ScpA family. In terms of assembly, component of a cohesin-like complex composed of ScpA, ScpB and the Smc homodimer, in which ScpA and ScpB bind to the head domain of Smc. The presence of the three proteins is required for the association of the complex with DNA.

The protein localises to the cytoplasm. Participates in chromosomal partition during cell division. May act via the formation of a condensin-like complex containing Smc and ScpB that pull DNA away from mid-cell into both cell halves. The polypeptide is Segregation and condensation protein A (Streptococcus mitis).